Reading from the N-terminus, the 905-residue chain is MKKRIDYLSNKQNKYSIRRFTVGTTSVIVGATILFGIGNHQAQASEQSNDTTQSSKNNASADSEKNNMIETPQLNTTANDTSDISANTNSANVDSTAKPMSTQTSNTTTTEPASTNETPQLTAIKDQATAAKMQDQTVPQEANSQVDNKTTNDANSIATNSELKNPQTLDLPQSSPQTISNAQGTSKPSVRTRAVRSLAVAEPVVNAADAKGTNVNDKVTAKDFQLEKTTFDPNQSGNTFMAANFTVTGQVKSGDYFTAKLPDSVTGNGDVDYSNSNNTMPIADIVNDKNEVVAKATYDILTKTYTFVFTDYVNDKQNINGKFSLPLFTDRAKAPKSGTYDANINIADEMFNNKITYNYSSPIAGIDKPNGANISSQIIGVDTASGQNTYKQTVFVNPKQRVLGNTWVYIKGYQDKIEESSGKVSATDTKLRIFEVNDTSKLSDSYYADPNDSNLKEVTDQFKDKITYKYQNVASINFGDINKTYVVLVEGHYDKTGKNLKTQVIQENVDPATGKDYSIFGWNNENVVRYGGGSADGDSAVNPKDPTPGPPVDPEPSPDPEPEPSPDPDPEPTPDPEPSPDPDPDSDSDSDSGSDSDSDSDSDSDSDSDSGSDSDSDSDSDSESDSESDSDSDSESDSDSDSDSESDSDSDSDSDSDSDSDSDSDSDSDSDSDSDSDSDSDSESDSDSDSDSESDSDSDSDSDSDSDSDSDSDSDSDSDSDSDSDSDSESDSDSDSDSDSDSDSDSDSDSDSDSDSDSDSDSDSDSESDSDSDSDSDSDSDSDSDSDSDSDSDSDSDSDSESDSDSDSDSDSDSDSDSDSDSDSDSDSDSDSRVTPPNNEQKAPSNPKGEVNHSNKVSKQHKTDALPETGDKSENTNATLFGAMMALLGSLLLFRKRKQDHKEKA.

The N-terminal stretch at 1–44 is a signal peptide; the sequence is MKKRIDYLSNKQNKYSIRRFTVGTTSVIVGATILFGIGNHQAQA. Positions 15 to 26 match the YSIRK-G/S signaling motif motif; that stretch reads YSIRRFTVGTTS. Composition is skewed to polar residues over residues 44-61 and 68-101; these read ASEQSNDTTQSSKNNASA and MIETPQLNTTANDTSDISANTNSANVDSTAKPMS. The disordered stretch occupies residues 44–191; that stretch reads ASEQSNDTTQ…AQGTSKPSVR (148 aa). The tract at residues 45–542 is ligand binding A region; that stretch reads SEQSNDTTQS…GSADGDSAVN (498 aa). The span at 102–119 shows a compositional bias: low complexity; it reads TQTSNTTTTEPASTNETP. Positions 134 to 189 are enriched in polar residues; sequence QDQTVPQEANSQVDNKTTNDANSIATNSELKNPQTLDLPQSSPQTISNAQGTSKPS. Residues 272 to 276 carry the MIDAS-like motif motif; that stretch reads DYSNS. A disordered region spans residues 530–877; it reads YGGGSADGDS…ETGDKSENTN (348 aa). Pro residues predominate over residues 545–555; sequence DPTPGPPVDPE. Residues 556–829 show a composition bias toward acidic residues; sequence PSPDPEPEPS…SDSDSDSDSD (274 aa). The span at 833–844 shows a compositional bias: polar residues; that stretch reads RVTPPNNEQKAP. Residues 861–874 show a composition bias toward basic and acidic residues; the sequence is HKTDALPETGDKSE. Positions 866-870 match the LPXTG sorting signal motif; the sequence is LPETG. Pentaglycyl murein peptidoglycan amidated threonine is present on Thr869. A propeptide spans 870-905 (removed by sortase); sequence GDKSENTNATLFGAMMALLGSLLLFRKRKQDHKEKA.

It belongs to the serine-aspartate repeat-containing protein (SDr) family. Post-translationally, proteolytically cleaved by aureolysin (aur). This cleavage leads to the inactivation of ClfB.

The protein localises to the secreted. It is found in the cell wall. In terms of biological role, cell surface-associated protein implicated in virulence by promoting bacterial attachment to both alpha- and beta-chains of human fibrinogen and inducing the formation of bacterial clumps. This chain is Clumping factor B (clfB), found in Staphylococcus aureus (strain MSSA476).